Consider the following 230-residue polypeptide: Secretory carrier-associated membrane protein 4 (230 aa).

Residues 1–39 (MAGKENNFPPLPHFLPLKPCFYQDFSDEIPVEHQVLVKR) are Cytoplasmic-facing. Transmembrane regions (helical) follow at residues 40 to 60 (IYRLWMFYCTTLGVNLVACLA), 61 to 81 (WWIAGGAGANFGLAMLWLVLF), 106 to 126 (MAFFFIFGAQFVLTVIQAIGF), and 149 to 169 (VVMLIPAIMFSLSAVVMAITI). Over 170–230 (VKVHRIYRGA…SYSTSGSQWP (61 aa)) the chain is Cytoplasmic. A Phosphothreonine modification is found at threonine 194. Positions 197–230 (NPPSREAQFNSFSGNSLPEYPTVPSYSTSGSQWP) are disordered. Polar residues-rich tracts occupy residues 203–212 (AQFNSFSGNS) and 220–230 (PSYSTSGSQWP).

The protein belongs to the SCAMP family.

The protein resides in the membrane. In terms of biological role, probably involved in membrane protein trafficking. This Rattus norvegicus (Rat) protein is Secretory carrier-associated membrane protein 4 (Scamp4).